The following is a 481-amino-acid chain: Cis-aconitate decarboxylase (481 aa).

The interval 462–481 (SPPEVASNSPACNNSITNLS) is disordered. The segment covering 467–481 (ASNSPACNNSITNLS) has biased composition (polar residues).

This sequence belongs to the PrpD family. In terms of assembly, homodimer. In terms of tissue distribution, expressed in LPS-tolerized macrophages (at protein level). Expressed in peripheral blood mononuclear cells (PBMCs), microglia and macrophage cells.

It is found in the mitochondrion. It carries out the reaction cis-aconitate + H(+) = itaconate + CO2. Cis-aconitate decarboxylase that catalyzes production of itaconate and is involved in the inhibition of the inflammatory response. Acts as a negative regulator of the Toll-like receptors (TLRs)-mediated inflammatory innate response by stimulating the tumor necrosis factor alpha-induced protein TNFAIP3 expression via reactive oxygen species (ROS) in LPS-tolerized macrophages. Involved in antimicrobial response of innate immune cells; ACOD1-mediated itaconic acid production contributes to the antimicrobial activity of macrophages by generating itaconate, leading to alkylation of proteins, such as TFEB. Involved in antiviral response following infection by flavivirus in neurons: ACOD1-mediated itaconate production inhibits the activity of succinate dehydrogenase, generating a metabolic state in neurons that suppresses replication of viral genomes. Plays a role in the embryo implantation. This chain is Cis-aconitate decarboxylase, found in Homo sapiens (Human).